The following is a 444-amino-acid chain: Nuclear envelope integral membrane protein 1 (444 aa).

An N-terminal signal peptide occupies residues 1 to 43 (MAGGMKVAVSPAVGPGPWGSGVGGGGTVRLLLILSGCLVYGTA). N-linked (GlcNAc...) asparagine glycosylation occurs at N125. Transmembrane regions (helical) follow at residues 161 to 181 (PKLF…DLLS), 186 to 206 (FYYS…IIFI), 216 to 236 (PIYV…QLVF), 245 to 265 (CYWQ…FAVC), and 289 to 309 (LCFM…IIIA). The tract at residues 186–297 (FYYSTGMSVG…GLCFMYSGIQ (112 aa)) is a; required for its colocalization with lamins at the nuclear envelope. The segment at 336–405 (PVPPRLLTEE…LTPNEVSVHE (70 aa)) is b; required for interaction with RAN-GTP. Positions 336-444 (PVPPRLLTEE…PAITQNNFLT (109 aa)) are required for nuclear localization. Phosphoserine occurs at positions 368, 424, and 425.

It belongs to the NEMP family. As to quaternary structure, homooligomer. Interacts with RAN-GTP. Interacts with EMD. Phosphorylation may regulate its interaction with RAN-GTP.

The protein localises to the nucleus inner membrane. It is found in the nucleus envelope. Together with EMD, contributes to nuclear envelope stiffness in germ cells. Required for female fertility. Essential for normal erythropoiesis. Required for efficient nuclear envelope opening and enucleation during the late stages of erythroblast maturation. This is Nuclear envelope integral membrane protein 1 (NEMP1) from Pongo abelii (Sumatran orangutan).